Reading from the N-terminus, the 455-residue chain is Tubulin alpha-1 chain (455 aa).

8 residues coordinate GTP: Q11, E75, S144, G148, T149, T183, N210, and N232. Residue E75 participates in Mg(2+) binding. E258 is an active-site residue.

This sequence belongs to the tubulin family. In terms of assembly, dimer of alpha and beta chains. A typical microtubule is a hollow water-filled tube with an outer diameter of 25 nm and an inner diameter of 15 nM. Alpha-beta heterodimers associate head-to-tail to form protofilaments running lengthwise along the microtubule wall with the beta-tubulin subunit facing the microtubule plus end conferring a structural polarity. Microtubules usually have 13 protofilaments but different protofilament numbers can be found in some organisms and specialized cells. The cofactor is Mg(2+).

It localises to the cytoplasm. The protein resides in the cytoskeleton. The catalysed reaction is GTP + H2O = GDP + phosphate + H(+). Its function is as follows. Tubulin is the major constituent of microtubules, a cylinder consisting of laterally associated linear protofilaments composed of alpha- and beta-tubulin heterodimers. Microtubules grow by the addition of GTP-tubulin dimers to the microtubule end, where a stabilizing cap forms. Below the cap, tubulin dimers are in GDP-bound state, owing to GTPase activity of alpha-tubulin. In Schizosaccharomyces pombe (strain 972 / ATCC 24843) (Fission yeast), this protein is Tubulin alpha-1 chain (nda2).